Consider the following 315-residue polypeptide: Methionyl-tRNA formyltransferase (315 aa).

Serine 113–proline 116 provides a ligand contact to (6S)-5,6,7,8-tetrahydrofolate.

Belongs to the Fmt family.

The catalysed reaction is L-methionyl-tRNA(fMet) + (6R)-10-formyltetrahydrofolate = N-formyl-L-methionyl-tRNA(fMet) + (6S)-5,6,7,8-tetrahydrofolate + H(+). Attaches a formyl group to the free amino group of methionyl-tRNA(fMet). The formyl group appears to play a dual role in the initiator identity of N-formylmethionyl-tRNA by promoting its recognition by IF2 and preventing the misappropriation of this tRNA by the elongation apparatus. The sequence is that of Methionyl-tRNA formyltransferase from Escherichia coli (strain SMS-3-5 / SECEC).